The sequence spans 548 residues: MQDRLRILEDLNMLYIRQMALSLEDTELQRKLDHEIRMREGACKLLAACSQREQALEATKSLLVCNSRILSYMGELQRRKEAQVLGKTGRRPSDSVQPPERSPCRGRVCISDLRIPLMWKDTEYFKNKGDLHRWAVFLLLQLGEQIQDTEMVLVDRTLTDISFQNNAIFAEAGPDFELRLELYGACVEEEGALAGAPKRLATKLSSSLGRSSGKRVRASLDSAGGSGNSPILLPTPAVGGPRYHLLAHTTLTLAAVQDGFRTHDLTLTSHEENPAWLPLYGSMCCRLVAQPLCMTQPTASGTLRVQQAGELQSGTLVHGVLKGTNLFCYWRSEDADSGQEPLFTILINKETRVRAGELEQAPEWPFTLSISNRYGDDEVTNTLQVQSRDALQSWMEALWQLFLDMSQWKHCCDEVMKIETPAPRKPPQALAKQGSLYHEMAIEPLEDIAAVTDILAQREGTRLEPPPPWLAMFTDQPALRSSCSPASVPTWTQPLPWGRPRTFSLDAVPADHSLGPSRSVAPLPPQRSPQSRGFYSKSQLSTWLQSPV.

Positions 10 to 85 constitute an REM-1 domain; it reads DLNMLYIRQM…LQRRKEAQVL (76 aa). Residues Ser-22 and Ser-93 each carry the phosphoserine modification. Positions 83–103 are disordered; sequence QVLGKTGRRPSDSVQPPERSP. Arg-217 bears the Asymmetric dimethylarginine mark. Phosphoserine is present on Ser-219. The 108-residue stretch at 296 to 403 folds into the PH domain; that stretch reads QPTASGTLRV…WMEALWQLFL (108 aa). A phosphoserine mark is found at Ser-504, Ser-513, and Ser-528. The segment at 506 to 548 is disordered; that stretch reads DAVPADHSLGPSRSVAPLPPQRSPQSRGFYSKSQLSTWLQSPV. A compositionally biased stretch (polar residues) spans 528 to 548; sequence SPQSRGFYSKSQLSTWLQSPV.

Interacts via its C-terminal region with the TAX1BP3 PDZ domain. This interaction facilitates Rho-mediated activation of the c-Fos serum response element (SRE). Interacts with SEPT9. Specifically binds to GTP-bound RHOA, RHOB and RHOC and inhibits their GTPase activity.

Mediates Rho signaling to activate NF-kappa-B and may confer increased resistance to apoptosis to cells in gastric tumorigenesis. May play a novel role in the organization of septin structures. This is Rhotekin from Rattus norvegicus (Rat).